The primary structure comprises 208 residues: Uracil phosphoribosyltransferase (208 aa).

Residues R78, R103, and 130 to 138 (DPMLATGGS) contribute to the 5-phospho-alpha-D-ribose 1-diphosphate site. Residues I193 and 198–200 (GDA) contribute to the uracil site. D199 lines the 5-phospho-alpha-D-ribose 1-diphosphate pocket.

The protein belongs to the UPRTase family. Requires Mg(2+) as cofactor.

It carries out the reaction UMP + diphosphate = 5-phospho-alpha-D-ribose 1-diphosphate + uracil. It participates in pyrimidine metabolism; UMP biosynthesis via salvage pathway; UMP from uracil: step 1/1. Its activity is regulated as follows. Allosterically activated by GTP. Its function is as follows. Catalyzes the conversion of uracil and 5-phospho-alpha-D-ribose 1-diphosphate (PRPP) to UMP and diphosphate. In Proteus mirabilis (strain HI4320), this protein is Uracil phosphoribosyltransferase.